Reading from the N-terminus, the 203-residue chain is GTP-binding protein rho4 (203 aa).

Gly21–Thr28 provides a ligand contact to GTP. The Effector region motif lies at Tyr43 to Tyr51. Residue Asp70–Gln74 coordinates GTP. At Cys200 the chain carries Cysteine methyl ester. A lipid anchor (S-geranylgeranyl cysteine) is attached at Cys200. The propeptide at Val201–Leu203 is removed in mature form.

This sequence belongs to the small GTPase superfamily. Rho family.

The protein localises to the membrane. Required for cell separation. Involved in the regulation of the septum degradation during cytokinesis and in the organization of F-actin patches and cytoplasmic microtubules. The chain is GTP-binding protein rho4 (rho4) from Schizosaccharomyces pombe (strain 972 / ATCC 24843) (Fission yeast).